The primary structure comprises 104 residues: MFVVTNRITVKKGFAEKMAPRFTKGGKIEALQGFHKIEVWKVTRDHENEDMYVNTWWETEKDFEAWTKSDAFKEAHQNRDKTSSESSPVISSEIVKATVLSTLN.

One can recognise an ABM domain in the interval 2-94 (FVVTNRITVK…ESSPVISSEI (93 aa)). Asparagine 6 lines the Fe cation pocket. Position 76 (histidine 76) interacts with heme.

The protein belongs to the antibiotic biosynthesis monooxygenase family. Heme-degrading monooxygenase IsdG subfamily. As to quaternary structure, homodimer.

The protein resides in the cytoplasm. The catalysed reaction is heme b + 5 AH2 + 4 O2 + 2 H(+) = delta-staphylobilin + Fe(2+) + formaldehyde + 5 A + 4 H2O. It catalyses the reaction heme b + 5 AH2 + 4 O2 + 2 H(+) = beta-staphylobilin + Fe(2+) + formaldehyde + 5 A + 4 H2O. Its function is as follows. Allows bacterial pathogens to use the host heme as an iron source. Catalyzes the oxidative degradation of the heme macrocyclic porphyrin ring to the oxo-bilirubin chromophore staphylobilin (a mixture of the linear tetrapyrroles 5-oxo-delta-bilirubin and 15-oxo-beta-bilirubin) in the presence of a suitable electron donor such as ascorbate or NADPH--cytochrome P450 reductase, with subsequent release of free iron. This is Heme oxygenase (staphylobilin-producing) (isdG) from Staphylococcus haemolyticus (strain JCSC1435).